Consider the following 345-residue polypeptide: MTTATISLSTLQASRPSVAARADAAARWRVADVEALYALPFMDLLFQAQQVHRAHFDANEVQLSTLLSIKTGGCAEDCGYCPQSAHFDTAVEASKLMPIDEVLDAANAAKAQGATRFCMGAAWRSPKERDMERVTEMVREVRALGLETCMTLGMLDGEQARELKDAGLDYYNHNLDSAPDFYGQVISTRTYQDRLDTLGNVRDAGINVCCGGIVGMGESRTQRAGLIAQLANLSPYPESVPINNLVPVPGTPLADAEPIDPFEFVRTIAVARITMPTTMVRLSAGREQMDEALQALCFAAGANSIFYGDKLLTTSNPQAARDRALFERLGLRVQGERPAVRTSDN.

The Radical SAM core domain occupies 59 to 286 (NEVQLSTLLS…TTMVRLSAGR (228 aa)). Cys74, Cys78, and Cys81 together coordinate [4Fe-4S] cluster. [2Fe-2S] cluster contacts are provided by Cys118, Cys149, Cys209, and Arg281.

This sequence belongs to the radical SAM superfamily. Biotin synthase family. Homodimer. The cofactor is [4Fe-4S] cluster. Requires [2Fe-2S] cluster as cofactor.

The enzyme catalyses (4R,5S)-dethiobiotin + (sulfur carrier)-SH + 2 reduced [2Fe-2S]-[ferredoxin] + 2 S-adenosyl-L-methionine = (sulfur carrier)-H + biotin + 2 5'-deoxyadenosine + 2 L-methionine + 2 oxidized [2Fe-2S]-[ferredoxin]. The protein operates within cofactor biosynthesis; biotin biosynthesis; biotin from 7,8-diaminononanoate: step 2/2. Catalyzes the conversion of dethiobiotin (DTB) to biotin by the insertion of a sulfur atom into dethiobiotin via a radical-based mechanism. This chain is Biotin synthase, found in Leptothrix cholodnii (strain ATCC 51168 / LMG 8142 / SP-6) (Leptothrix discophora (strain SP-6)).